A 176-amino-acid chain; its full sequence is Ferredoxin-type protein NapF (176 aa).

4Fe-4S ferredoxin-type domains lie at 39-68 (VENSIFVARCTRCGDCLSVCETNILVKGDA) and 71-100 (PEVRFDNGECTFCGKCVDACKQPIFYPRDQ). Cysteine 48, cysteine 51, cysteine 54, cysteine 58, cysteine 80, cysteine 83, cysteine 86, cysteine 90, cysteine 113, cysteine 121, cysteine 124, cysteine 128, cysteine 152, cysteine 155, cysteine 158, and cysteine 162 together coordinate [4Fe-4S] cluster. 4Fe-4S ferredoxin-type domains follow at residues 119–138 (IECRTCQDNCPANAIRFKLQ) and 143–172 (AQPLVNFDACNGCGACVQGCPVNAITMNDL).

It belongs to the NapF family. As to quaternary structure, interacts with the cytoplasmic NapA precursor. It depends on [4Fe-4S] cluster as a cofactor.

It localises to the cytoplasm. Could be involved in the maturation of NapA, the catalytic subunit of the periplasmic nitrate reductase, before its export into the periplasm. The chain is Ferredoxin-type protein NapF from Haemophilus influenzae (strain ATCC 51907 / DSM 11121 / KW20 / Rd).